We begin with the raw amino-acid sequence, 278 residues long: Potassium/proton antiporter CemA (278 aa).

4 consecutive transmembrane segments (helical) span residues 60-80 (YLLLLITVPLIVNQISKSFVF), 155-175 (AMKNLLADVLAFVTFVYLIVT), 201-221 (FLIILFTDIFVGFHSTHGWEV), and 239-259 (IFLFIATFPVVLDTVFKYWIF).

The protein belongs to the CemA family.

Its subcellular location is the plastid. The protein localises to the chloroplast inner membrane. The catalysed reaction is K(+)(in) + H(+)(out) = K(+)(out) + H(+)(in). Functionally, contributes to K(+)/H(+) antiport activity by supporting proton efflux to control proton extrusion and homeostasis in chloroplasts in a light-dependent manner to modulate photosynthesis. Prevents excessive induction of non-photochemical quenching (NPQ) under continuous-light conditions. Indirectly promotes efficient inorganic carbon uptake into chloroplasts. This is Potassium/proton antiporter CemA from Rhodomonas salina (Cryptomonas salina).